The primary structure comprises 269 residues: Shikimate dehydrogenase (NADP(+)) (269 aa).

Shikimate-binding positions include 14–16 (SKS) and threonine 61. Residue lysine 65 is the Proton acceptor of the active site. Glutamate 77 provides a ligand contact to NADP(+). Shikimate contacts are provided by asparagine 86 and aspartate 102. NADP(+) contacts are provided by residues 126–130 (GAGGA), 149–154 (NRTLTK), and methionine 213. Tyrosine 215 provides a ligand contact to shikimate. Glycine 238 provides a ligand contact to NADP(+).

It belongs to the shikimate dehydrogenase family. Homodimer.

The enzyme catalyses shikimate + NADP(+) = 3-dehydroshikimate + NADPH + H(+). Its pathway is metabolic intermediate biosynthesis; chorismate biosynthesis; chorismate from D-erythrose 4-phosphate and phosphoenolpyruvate: step 4/7. Involved in the biosynthesis of the chorismate, which leads to the biosynthesis of aromatic amino acids. Catalyzes the reversible NADPH linked reduction of 3-dehydroshikimate (DHSA) to yield shikimate (SA). The polypeptide is Shikimate dehydrogenase (NADP(+)) (Actinobacillus succinogenes (strain ATCC 55618 / DSM 22257 / CCUG 43843 / 130Z)).